Consider the following 276-residue polypeptide: Pantothenate synthetase (276 aa).

Position 27–34 (Met-27–His-34) interacts with ATP. His-34 (proton donor) is an active-site residue. Residue Gln-58 coordinates (R)-pantoate. Gln-58 lines the beta-alanine pocket. Gly-145–Asp-148 lines the ATP pocket. Gln-151 serves as a coordination point for (R)-pantoate. ATP-binding positions include Ile-174 and Leu-182–Arg-185.

This sequence belongs to the pantothenate synthetase family. Homodimer.

Its subcellular location is the cytoplasm. It carries out the reaction (R)-pantoate + beta-alanine + ATP = (R)-pantothenate + AMP + diphosphate + H(+). The protein operates within cofactor biosynthesis; (R)-pantothenate biosynthesis; (R)-pantothenate from (R)-pantoate and beta-alanine: step 1/1. In terms of biological role, catalyzes the condensation of pantoate with beta-alanine in an ATP-dependent reaction via a pantoyl-adenylate intermediate. This is Pantothenate synthetase from Aromatoleum aromaticum (strain DSM 19018 / LMG 30748 / EbN1) (Azoarcus sp. (strain EbN1)).